The primary structure comprises 428 residues: Trigger factor (428 aa).

The PPIase FKBP-type domain occupies 165-240 (ADLIKLDAEG…VKEVKRMELP (76 aa)).

This sequence belongs to the FKBP-type PPIase family. Tig subfamily.

It localises to the cytoplasm. It catalyses the reaction [protein]-peptidylproline (omega=180) = [protein]-peptidylproline (omega=0). Functionally, involved in protein export. Acts as a chaperone by maintaining the newly synthesized protein in an open conformation. Functions as a peptidyl-prolyl cis-trans isomerase. This Prosthecochloris aestuarii (strain DSM 271 / SK 413) protein is Trigger factor.